The sequence spans 219 residues: Proteasome subunit beta type-9 (219 aa).

The propeptide at 1 to 20 is removed in mature form; the sequence is MLRTGAPNGDLPRAGEVHTG. Threonine 21 serves as the catalytic Nucleophile. N6-acetyllysine occurs at positions 53 and 109.

Belongs to the peptidase T1B family. The 26S proteasome consists of a 20S proteasome core and two 19S regulatory subunits. The 20S proteasome core is composed of 28 subunits that are arranged in four stacked rings, resulting in a barrel-shaped structure. The two end rings are each formed by seven alpha subunits, and the two central rings are each formed by seven beta subunits. The catalytic chamber with the active sites is on the inside of the barrel. Component of the immunoproteasome, where it displaces the equivalent housekeeping subunit PSMB6. Component of the spermatoproteasome, a form of the proteasome specifically found in testis. Post-translationally, autocleaved. The resulting N-terminal Thr residue of the mature subunit is responsible for the nucleophile proteolytic activity.

It localises to the cytoplasm. It is found in the nucleus. It carries out the reaction Cleavage of peptide bonds with very broad specificity.. In terms of biological role, the proteasome is a multicatalytic proteinase complex which is characterized by its ability to cleave peptides with Arg, Phe, Tyr, Leu, and Glu adjacent to the leaving group at neutral or slightly basic pH. The proteasome has an ATP-dependent proteolytic activity. This subunit is involved in antigen processing to generate class I binding peptides. The chain is Proteasome subunit beta type-9 (PSMB9) from Bos taurus (Bovine).